We begin with the raw amino-acid sequence, 30 residues long: Bowman-Birk type proteinase inhibitor 4 (30 aa).

2 disulfides stabilise this stretch: Cys9-Cys24 and Cys14-Cys22.

Inhibits trypsin (IC(50)=17.60 nM) and, to a lesser extent, alpha-chymotrypsin (IC(50)=2.38 uM). In Lathyrus sativus (White vetchling), this protein is Bowman-Birk type proteinase inhibitor 4.